The following is a 215-amino-acid chain: Cytochrome b6 (215 aa).

A helical membrane pass occupies residues 32–52; it reads IFYCLGGITLTCFLVQVATGF. A heme c-binding site is contributed by Cys35. Heme b-binding residues include His86 and His100. 3 helical membrane-spanning segments follow: residues 90–110, 116–136, and 186–206; these read ASMM…TGGF, LTWV…VTGY, and LHTF…FPMI. The heme b site is built by His187 and His202.

Belongs to the cytochrome b family. PetB subfamily. In terms of assembly, the 4 large subunits of the cytochrome b6-f complex are cytochrome b6, subunit IV (17 kDa polypeptide, PetD), cytochrome f and the Rieske protein, while the 4 small subunits are PetG, PetL, PetM and PetN. The complex functions as a dimer. It depends on heme b as a cofactor. The cofactor is heme c.

It is found in the plastid. The protein resides in the chloroplast thylakoid membrane. Component of the cytochrome b6-f complex, which mediates electron transfer between photosystem II (PSII) and photosystem I (PSI), cyclic electron flow around PSI, and state transitions. This is Cytochrome b6 from Vitis vinifera (Grape).